Here is a 296-residue protein sequence, read N- to C-terminus: D-alanine--D-alanine ligase (296 aa).

Positions 99–292 (TYRVLDGYVN…FEELVDAIIQ (194 aa)) constitute an ATP-grasp domain. 125-176 (GFPCVIKPRKEGSSIGVHICDNSNQLYNDLSEELKKYNEMMIQRYIEGRELT) provides a ligand contact to ATP. Positions 247, 259, and 261 each coordinate Mg(2+).

This sequence belongs to the D-alanine--D-alanine ligase family. It depends on Mg(2+) as a cofactor. Mn(2+) serves as cofactor.

Its subcellular location is the cytoplasm. It carries out the reaction 2 D-alanine + ATP = D-alanyl-D-alanine + ADP + phosphate + H(+). Its pathway is cell wall biogenesis; peptidoglycan biosynthesis. Cell wall formation. The sequence is that of D-alanine--D-alanine ligase from Pseudothermotoga lettingae (strain ATCC BAA-301 / DSM 14385 / NBRC 107922 / TMO) (Thermotoga lettingae).